Reading from the N-terminus, the 317-residue chain is Olfactory receptor 5K17 (317 aa).

Residues 1–28 (MMKANHSLTVEFILIGFSDHTDLKTLLF) lie on the Extracellular side of the membrane. A glycan (N-linked (GlcNAc...) asparagine) is linked at Asn-5. The chain crosses the membrane as a helical span at residues 29–49 (LLFSAIYLVTIVGNLGLVALI). Residues 50–56 (YMEPRLH) are Cytoplasmic-facing. The helical transmembrane segment at 57 to 77 (TPMYIFLGNLALMDSCCSCAI) threads the bilayer. The Extracellular portion of the chain corresponds to 78-93 (TPKMLENFFSVDRRIS). A helical transmembrane segment spans residues 94–114 (LYECMVQFYFLCLAETADCFL). Cys-97 and Cys-189 are disulfide-bonded. At 115–144 (LAAMAYDRYVAICNPLQYHTMMSKKLSIQM) the chain is on the cytoplasmic side. Residues 145-165 (SIGTFIASNLHSLIHTGCLLR) traverse the membrane as a helical segment. The Extracellular segment spans residues 166–198 (LNFCKSRRIDHFFCDILPLYKLSCTDPFINELM). The chain crosses the membrane as a helical span at residues 199–219 (LYIFSMPIQVFTITTVLVSYS). The Cytoplasmic segment spans residues 220-239 (CILLTVFKMKSKDGRGKAFS). The helical transmembrane segment at 240-259 (TCASHFFSVSIFYICLLMYI) threads the bilayer. Topologically, residues 260–268 (GPSKNSNKD) are extracellular. The helical transmembrane segment at 269–289 (IPVGVFYTIVIPLLNPFIYSL) threads the bilayer. Residues 290-317 (RNKEVVNAVKKVMKTHSIFKNSSASIAH) are Cytoplasmic-facing.

The protein belongs to the G-protein coupled receptor 1 family.

The protein localises to the cell membrane. Its function is as follows. Potential odorant receptor. The polypeptide is Olfactory receptor 5K17 (Mus musculus (Mouse)).